A 149-amino-acid chain; its full sequence is Large ribosomal subunit protein uL11 (149 aa).

Belongs to the universal ribosomal protein uL11 family. Part of the ribosomal stalk of the 50S ribosomal subunit. Interacts with L10 and the large rRNA to form the base of the stalk. L10 forms an elongated spine to which L12 dimers bind in a sequential fashion forming a multimeric L10(L12)X complex. Post-translationally, one or more lysine residues are methylated.

In terms of biological role, forms part of the ribosomal stalk which helps the ribosome interact with GTP-bound translation factors. The chain is Large ribosomal subunit protein uL11 from Methylobacterium nodulans (strain LMG 21967 / CNCM I-2342 / ORS 2060).